Here is a 712-residue protein sequence, read N- to C-terminus: Eukaryotic peptide chain release factor GTP-binding subunit (712 aa).

A compositionally biased stretch (polar residues) spans 1–23; it reads MSNPQDQLSNDLANASISGDQSK. Disordered regions lie at residues 1–64, 76–115, 132–162, and 184–256; these read MSNP…QYGG, GYQQNYNNRGGYQQNYNNRGGYQQNYNNRGGYQQQQQQQY, PQQQQQQQTQSQGMSLADFQKQKAEQQASLN, and TKKV…APVS. A several sort of repeats region spans residues 16 to 143; sequence SISGDQSKQP…QQQQQQTQSQ (128 aa). Low complexity-rich tracts occupy residues 24–35 and 48–64; these read QPQQQQPQQQQP and TGGYQQFQPQQQQQYGG. 2 stretches are compositionally biased toward low complexity: residues 132–141 and 190–201; these read PQQQQQQQTQ and AKPAASKEASPA. The segment at 144–282 is charged; sequence GMSLADFQKQ…DEVDEEVVKD (139 aa). The span at 202–217 shows a compositional bias: basic and acidic residues; that stretch reads PKDEEASAEPEAKKES. Residues 218–256 are compositionally biased toward low complexity; the sequence is TPVPASSSPAPAAADSTPAPVKKESTPTPSVASKSAPVS. Residues 287-512 form the tr-type G domain; it reads KDHVSIIFMG…YLDNMDTMNR (226 aa). Residues 296–303 are G1; the sequence is GHVDAGKS. 296–303 serves as a coordination point for GTP; the sequence is GHVDAGKS. Residues 352–356 form a G2 region; it reads GKTIE. At threonine 370 the chain carries Phosphothreonine. The tract at residues 373-376 is G3; sequence DAPG. Residues 373-377 and 435-438 contribute to the GTP site; these read DAPGH and NKMD. The segment at 435 to 438 is G4; that stretch reads NKMD. The segment at 476–478 is G5; sequence SGY.

This sequence belongs to the TRAFAC class translation factor GTPase superfamily. Classic translation factor GTPase family. ERF3 subfamily.

Its subcellular location is the cytoplasm. Involved in translation termination. Stimulates the activity of ERF1. Binds guanine nucleotides. The polypeptide is Eukaryotic peptide chain release factor GTP-binding subunit (SUP35) (Candida maltosa (Yeast)).